Reading from the N-terminus, the 214-residue chain is ER lumen protein-retaining receptor 3 (214 aa).

Topologically, residues 1-4 (MNVF) are lumenal. A helical membrane pass occupies residues 5–24 (RILGDLSHLLAMILLLVKIW). The Cytoplasmic segment spans residues 25–32 (RSKSCAGI). A helical membrane pass occupies residues 33 to 52 (SGKSQILFALVFTTRYLDLF). The interaction with the K-D-E-L motif on target proteins stretch occupies residues 47–48 (RY). Residues 53 to 58 (SNFISI) are Lumenal-facing. The helical transmembrane segment at 59–79 (YNTVMKVVFLLCAYVTVYMIY) threads the bilayer. At 80-92 (WKFRKTFDIENDT) the chain is on the cytoplasmic side. A helical transmembrane segment spans residues 93 to 110 (FRLEFLLVPVTGLSFLVN). The Lumenal segment spans residues 111–116 (YSYTPM). The helical transmembrane segment at 117–135 (EVLWTFSIYLESVAILPQL) threads the bilayer. Residues 136–149 (FMISKTGEAETITT) lie on the Cytoplasmic side of the membrane. Residues 150 to 168 (HYLFFLGLYRLLYLANWIR) form a helical membrane-spanning segment. The interaction with the K-D-E-L motif on target proteins stretch occupies residues 159–169 (RLLYLANWIRR). The Lumenal portion of the chain corresponds to 169–178 (RYQTENFYDQ). Residues 179–199 (ISVVSGVVQTIFYCDFFYLYV) form a helical membrane-spanning segment. Over 200-214 (TKVLKGKKLSLPVPV) the chain is Cytoplasmic. The segment at 204–207 (KGKK) is important for recycling of cargo proteins with the sequence motif K-D-E-L from the Golgi to the endoplasmic reticulum.

The protein belongs to the ERD2 family.

It is found in the endoplasmic reticulum membrane. Its subcellular location is the golgi apparatus membrane. It localises to the cytoplasmic vesicle. The protein localises to the COPI-coated vesicle membrane. Functionally, receptor for the C-terminal sequence motif K-D-E-L that is present on endoplasmic reticulum resident proteins and that mediates their recycling from the Golgi back to the endoplasmic reticulum. The sequence is that of ER lumen protein-retaining receptor 3 (Kdelr3) from Mus musculus (Mouse).